The sequence spans 695 residues: ATP-dependent zinc metalloprotease FtsH (695 aa).

The Cytoplasmic segment spans residues Met1–Asn15. The helical transmembrane segment at Ile16–Ser36 threads the bilayer. Residues Asn37–Gln139 are Extracellular-facing. A helical transmembrane segment spans residues Ile140 to Gly160. Residues Met161–Glu695 are Cytoplasmic-facing. Gly233–Thr240 is an ATP binding site. Zn(2+) is bound at residue His456. Glu457 is an active-site residue. Residues His460 and Asp532 each contribute to the Zn(2+) site. The interval Lys657–Glu695 is disordered. A compositionally biased stretch (basic and acidic residues) spans Gly674 to Glu695.

In the central section; belongs to the AAA ATPase family. This sequence in the C-terminal section; belongs to the peptidase M41 family. In terms of assembly, homohexamer. It depends on Zn(2+) as a cofactor.

It is found in the cell membrane. Acts as a processive, ATP-dependent zinc metallopeptidase for both cytoplasmic and membrane proteins. Plays a role in the quality control of integral membrane proteins. The sequence is that of ATP-dependent zinc metalloprotease FtsH from Lactococcus lactis subsp. lactis (strain IL1403) (Streptococcus lactis).